A 263-amino-acid polypeptide reads, in one-letter code: Chymotrypsinogen B (263 aa).

An N-terminal signal peptide occupies residues Met-1 to Gly-18. Cystine bridges form between Cys-19–Cys-140, Cys-60–Cys-76, Cys-154–Cys-219, Cys-186–Cys-200, and Cys-209–Cys-238. The region spanning Ile-34–Glu-261 is the Peptidase S1 domain. His-75 (charge relay system) is an active-site residue. Phosphoserine is present on Ser-93. Asp-120 (charge relay system) is an active-site residue. The Charge relay system role is filled by Ser-213.

Belongs to the peptidase S1 family.

The protein resides in the secreted. It localises to the extracellular space. It catalyses the reaction Preferential cleavage: Tyr-|-Xaa, Trp-|-Xaa, Phe-|-Xaa, Leu-|-Xaa.. This chain is Chymotrypsinogen B (Ctrb1), found in Rattus norvegicus (Rat).